A 60-amino-acid polypeptide reads, in one-letter code: Cytotoxin 1 (60 aa).

Intrachain disulfides connect Cys-3-Cys-21, Cys-14-Cys-38, Cys-42-Cys-53, and Cys-54-Cys-59.

This sequence belongs to the three-finger toxin family. Short-chain subfamily. Type IA cytotoxin sub-subfamily. As to quaternary structure, monomer in solution; Homodimer and oligomer in the presence of negatively charged lipids forming a pore with a size ranging between 20 and 30 angstroms. Expressed by the venom gland.

The protein localises to the secreted. Its subcellular location is the target cell membrane. In terms of biological role, basic protein that binds to cell membrane and depolarizes cardiomyocytes. This cytotoxin also possesses lytic activity on many other cells, including red blood cells. Interaction with sulfatides in the cell membrane induces pore formation and cell internalization and is responsible for cytotoxicity in cardiomyocytes. It targets the mitochondrial membrane and induces mitochondrial swelling and fragmentation. Inhibits protein kinases C. It binds to the integrin alpha-V/beta-3 with a moderate affinity. This is Cytotoxin 1 from Naja pallida (Red spitting cobra).